We begin with the raw amino-acid sequence, 104 residues long: Small ribosomal subunit protein uS10 (104 aa).

Belongs to the universal ribosomal protein uS10 family. Part of the 30S ribosomal subunit.

Its function is as follows. Involved in the binding of tRNA to the ribosomes. The chain is Small ribosomal subunit protein uS10 from Thermoplasma acidophilum (strain ATCC 25905 / DSM 1728 / JCM 9062 / NBRC 15155 / AMRC-C165).